The sequence spans 283 residues: Pantothenate synthetase (283 aa).

ATP is bound at residue 30–37 (MGYYHSGH). Catalysis depends on histidine 37, which acts as the Proton donor. Glutamine 61 contacts (R)-pantoate. Residue glutamine 61 participates in beta-alanine binding. An ATP-binding site is contributed by 147–150 (GQKD). Glutamine 153 provides a ligand contact to (R)-pantoate. ATP-binding positions include valine 176 and 184–187 (MSSR).

It belongs to the pantothenate synthetase family. As to quaternary structure, homodimer.

It is found in the cytoplasm. The enzyme catalyses (R)-pantoate + beta-alanine + ATP = (R)-pantothenate + AMP + diphosphate + H(+). It participates in cofactor biosynthesis; (R)-pantothenate biosynthesis; (R)-pantothenate from (R)-pantoate and beta-alanine: step 1/1. In terms of biological role, catalyzes the condensation of pantoate with beta-alanine in an ATP-dependent reaction via a pantoyl-adenylate intermediate. The chain is Pantothenate synthetase from Nitratidesulfovibrio vulgaris (strain DSM 19637 / Miyazaki F) (Desulfovibrio vulgaris).